The primary structure comprises 40 residues: U1-ectatotoxin-Eb1a subunit A (40 aa).

This sequence belongs to the ectatomin family. Ectatomin-Eq subfamily. Heterodimer of subunits A and B; disulfide-linked. As to expression, expressed by the venom gland.

It is found in the secreted. Its subcellular location is the target cell membrane. This Ectatomma brunneum (Ant) protein is U1-ectatotoxin-Eb1a subunit A.